The primary structure comprises 113 residues: Dolichyl-diphosphooligosaccharide--protein glycosyltransferase subunit dad1 (113 aa).

Residues 1-30 (MSVSVFSVVSRFLDEYVSSTPQRLKLLDAY) lie on the Cytoplasmic side of the membrane. Residues 31–51 (LLYILLTGALQFLYCLLVGTF) form a helical membrane-spanning segment. A topological domain (lumenal) is located at residue P52. The helical transmembrane segment at 53–73 (FNSFLSGFISSVGSFILAVCL) threads the bilayer. At 74–92 (RIQINPQNKSDFQGISPER) the chain is on the cytoplasmic side. A helical membrane pass occupies residues 93–113 (AFADFLFANTILHLVVVNFIG).

It belongs to the DAD/OST2 family. As to quaternary structure, component of the oligosaccharyltransferase (OST) complex.

Its subcellular location is the endoplasmic reticulum membrane. Its pathway is protein modification; protein glycosylation. Functionally, subunit of the oligosaccharyl transferase (OST) complex that catalyzes the initial transfer of a defined glycan (Glc(3)Man(9)GlcNAc(2) in eukaryotes) from the lipid carrier dolichol-pyrophosphate to an asparagine residue within an Asn-X-Ser/Thr consensus motif in nascent polypeptide chains, the first step in protein N-glycosylation. N-glycosylation occurs cotranslationally and the complex associates with the Sec61 complex at the channel-forming translocon complex that mediates protein translocation across the endoplasmic reticulum (ER). All subunits are required for a maximal enzyme activity. The chain is Dolichyl-diphosphooligosaccharide--protein glycosyltransferase subunit dad1 from Xenopus laevis (African clawed frog).